Reading from the N-terminus, the 402-residue chain is Prophage integrase IntZ (402 aa).

The 81-residue stretch at 103–183 (AGFKKVAEDW…RIGEIFKFAV (81 aa)) folds into the Core-binding (CB) domain. Positions 206–381 (GHNAWIPISE…AYLKQRRAMM (176 aa)) constitute a Tyr recombinase domain. Catalysis depends on residues Arg244, Lys271, His332, Arg335, and His359. Residue Tyr368 is the O-(3'-phospho-DNA)-tyrosine intermediate of the active site.

Belongs to the 'phage' integrase family.

In terms of biological role, integrase is necessary for integration of the phage into the host genome by site-specific recombination. In conjunction with excisionase, integrase is also necessary for excision of the prophage from the host genome. This is Prophage integrase IntZ (intZ) from Escherichia coli (strain K12).